The primary structure comprises 562 residues: NAD-dependent malic enzyme (562 aa).

Residue Tyr-101 is the Proton donor of the active site. Arg-154 contacts NAD(+). Residue Lys-172 is the Proton acceptor of the active site. 3 residues coordinate a divalent metal cation: Glu-243, Asp-244, and Asp-267. Residues Asp-267 and Asn-415 each contribute to the NAD(+) site.

The protein belongs to the malic enzymes family. In terms of assembly, homotetramer. The cofactor is Mg(2+). Requires Mn(2+) as cofactor.

It carries out the reaction (S)-malate + NAD(+) = pyruvate + CO2 + NADH. It catalyses the reaction oxaloacetate + H(+) = pyruvate + CO2. This chain is NAD-dependent malic enzyme, found in Shewanella piezotolerans (strain WP3 / JCM 13877).